Consider the following 138-residue polypeptide: Phosphoribosyl-AMP cyclohydrolase (138 aa).

Residue Asp84 coordinates Mg(2+). Residue Cys85 coordinates Zn(2+). Residues Asp86 and Asp88 each coordinate Mg(2+). Positions 102 and 109 each coordinate Zn(2+).

Belongs to the PRA-CH family. Homodimer. It depends on Mg(2+) as a cofactor. The cofactor is Zn(2+).

The protein localises to the cytoplasm. The catalysed reaction is 1-(5-phospho-beta-D-ribosyl)-5'-AMP + H2O = 1-(5-phospho-beta-D-ribosyl)-5-[(5-phospho-beta-D-ribosylamino)methylideneamino]imidazole-4-carboxamide. It participates in amino-acid biosynthesis; L-histidine biosynthesis; L-histidine from 5-phospho-alpha-D-ribose 1-diphosphate: step 3/9. Its function is as follows. Catalyzes the hydrolysis of the adenine ring of phosphoribosyl-AMP. The polypeptide is Phosphoribosyl-AMP cyclohydrolase (Burkholderia orbicola (strain MC0-3)).